Here is a 395-residue protein sequence, read N- to C-terminus: MHC class I-like protein MILL1 (395 aa).

Positions 1–32 (MLLSRNLRALAAIHLWIVYLLLEDLLGTCAEG) are cleaved as a signal peptide. The interval 57–148 (AVAEPHTLRY…ITAQNGQNTD (92 aa)) is alpha-1. Asn98, Asn163, and Asn199 each carry an N-linked (GlcNAc...) asparagine glycan. An alpha-2 region spans residues 149 to 240 (LHILQATFGC…SLRNGLLNTG (92 aa)). 2 disulfide bridges follow: Cys158–Cys221 and Cys260–Cys317. Positions 241–337 (FPKVIVTFRN…EPAATEAPVY (97 aa)) are alpha-3. The Ig-like C1-type domain maps to 242–333 (PKVIVTFRNY…HNINEPAATE (92 aa)). A disordered region spans residues 332–352 (TEAPVYGARREQPPTSGVGSR). A connecting peptide region spans residues 338–368 (GARREQPPTSGVGSRVGKSLWSAMTTALVVI). A lipid anchor (GPI-anchor amidated serine) is attached at Ser369. Positions 370–395 (WTLSQKLMGPLLWFCSGGFCSFLQCW) are cleaved as a propeptide — removed in mature form.

Belongs to the MHC class I family. Heterodimer with B2M. In terms of processing, N-glycosylated. As to expression, expressed in stomach, intestine, uterus, skeletal muscle and heart.

It is found in the cell membrane. The protein is MHC class I-like protein MILL1 of Mus musculus (Mouse).